Consider the following 359-residue polypeptide: Apelin receptor B (359 aa).

Over 1–36 (MNAMDNMTADYSPDYFDDAVNSSMCEYDEWEPSYSL) the chain is Extracellular. N-linked (GlcNAc...) asparagine glycans are attached at residues Asn-6 and Asn-21. Cystine bridges form between Cys-25–Cys-288 and Cys-107–Cys-186. A helical transmembrane segment spans residues 37–57 (IPVLYMLIFILGLTGNGVVIF). Residues 58-75 (TVWRAQSKRRAADVYIGN) are Cytoplasmic-facing. Residues 76–96 (LALADLTFVVTLPLWAVYTAL) traverse the membrane as a helical segment. Topologically, residues 97-108 (GYHWPFGVALCK) are extracellular. Residues 109–129 (ISSYVVLLNMYASVFCLTCLS) form a helical membrane-spanning segment. Topologically, residues 130 to 151 (LDRYMAIVHSLTSTQLRTRGHM) are cytoplasmic. A helical membrane pass occupies residues 152-172 (RASLTAIWLLSGVLAAPTLLF). The Extracellular portion of the chain corresponds to 173–213 (RTTVYDVETNRTSCAMDFNLVVSQPGQETYWIAGLSISSTA). Asn-182 carries N-linked (GlcNAc...) asparagine glycosylation. The helical transmembrane segment at 214–234 (LGFLIPLLAMMVCYGFIGCTV) threads the bilayer. The Cytoplasmic segment spans residues 235–251 (TRHFNSLRKEDQRKRRL). Residues 252–272 (LKIITTLVVVFAACWMPFHVV) traverse the membrane as a helical segment. At 273-286 (KTMDALSYLNLAPD) the chain is on the extracellular side. The helical transmembrane segment at 287–307 (SCTFLNLLLLAHPYATCLAYV) threads the bilayer. At 308-359 (NSCLNPLLYAFFDLRFRSQCLCLLNLKKALHASPASSLSSQKTEAQSLATKV) the chain is on the cytoplasmic side.

It belongs to the G-protein coupled receptor 1 family. As to expression, mesendodermal expression at the blastoderm margin appears by 4.5 hpf. At early gastrulation, expression is maintained ventrolaterally while expression in dorsal cells and random deep cells declines. During gastrulation and segmentation, expression is maintained in adaxial, intermediate, and lateral plate mesoderm. During late segmentation, expressed in several regions including the forming heart. By 24 hpf, expressed in the dorsal aorta, caudal vein, and intersomitic blood vessels.

It localises to the cell membrane. G protein-coupled receptor for peptide hormones apelin (apln) and apelin receptor early endogenous ligand (apela), that plays a role in the regulation of normal cardiovascular function and fluid homeostasis. When acting as apelin receptor, activates both G(i) protein pathway that inhibits adenylate cyclase activity, and the beta-arrestin pathway that promotes internalization of the receptor. Also functions as mechanoreceptor that is activated by pathological stimuli in a G-protein-independent fashion to induce beta-arrestin signaling, hence eliciting cardiac hypertrophy. However, the presence of apelin ligand blunts cardiac hypertrophic induction from APLNR/APJ on response to pathological stimuli. Plays a key role in early development such as gastrulation, blood vessels formation and heart morphogenesis by acting as a receptor for apela hormone, promoting endoderm and mesendoderm cell migration and regulating the migration of cells fated to become myocardial progenitors, respectively. Positively regulates angioblast migration toward the embryonic midline, i.e. the position of the future vessel formation, during vasculogenesis. May promote sinus venosus (SV)-derived endothelial cells migration into the developing heart to promote coronary blood vessel development. Required for cardiovascular development, particularly for intersomitic vein angiogenesis by acting as a receptor for apln hormone. Plays a role in various processes in adults such as regulation of blood vessel formation, blood pressure, heart contractility and heart failure. Acts redundantly with agtrl1a in heart development. Its function is as follows. G protein-coupled receptor for peptide hormones apelin (APLN) and apelin receptor early endogenous ligand (APELA/ELA), that plays a role in the regulation of normal cardiovascular function and fluid homeostasis. When acting as apelin receptor, activates both G(i) protein pathway that inhibits adenylate cyclase activity, and the beta-arrestin pathway that promotes internalization of the receptor. APLNR/APJ also functions as mechanoreceptor that is activated by pathological stimuli in a G-protein-independent fashion to induce beta-arrestin signaling, hence eliciting cardiac hypertrophy. Plays a key role in early development such as gastrulation, blood vessels formation and heart morphogenesis by acting as a APELA receptor. May promote angioblast migration toward the embryonic midline, i.e. the position of the future vessel formation, during vasculogenesis. Promotes sinus venosus (SV)-derived endothelial cells migration into the developing heart to promote coronary blood vessel development. Also plays a role in various processes in adults such as regulation of blood vessel formation, blood pressure, heart contractility and heart failure. The protein is Apelin receptor B (aplnrb) of Danio rerio (Zebrafish).